Consider the following 221-residue polypeptide: Germin-like protein subfamily 1 member 19 (221 aa).

Residues 1-21 (MKVSMSLILITLSALVTIAKA) form the signal peptide. A disulfide bridge links Cys-31 with Cys-48. The 138-residue stretch at 76-213 (SNVTTVNVDQ…AFQLDVNVVK (138 aa)) folds into the Cupin type-1 domain. N-linked (GlcNAc...) asparagine glycosylation occurs at Asn-77. Mn(2+)-binding residues include His-110, His-112, Glu-117, and His-159.

This sequence belongs to the germin family. Oligomer (believed to be a pentamer but probably hexamer).

The protein resides in the secreted. Its subcellular location is the extracellular space. It is found in the apoplast. In terms of biological role, may play a role in plant defense. Probably has no oxalate oxidase activity even if the active site is conserved. In Arabidopsis thaliana (Mouse-ear cress), this protein is Germin-like protein subfamily 1 member 19.